Reading from the N-terminus, the 420-residue chain is Phospholipase A1-II 3 (420 aa).

The N-terminal stretch at 1–21 is a signal peptide; it reads MCCFLLVSVLLATTLTDVASA. N-linked (GlcNAc...) asparagine glycosylation is present at Asn-231. Ser-240 (acyl-ester intermediate) is an active-site residue. Ser-240 serves as the catalytic Charge relay system. The N-linked (GlcNAc...) asparagine glycan is linked to Asn-294. Residues Asp-305 and His-343 each act as charge relay system in the active site. Positions 367–388 form a coiled coil; that stretch reads VVDRDLALVNKEVDALRDEYQV. N-linked (GlcNAc...) asparagine glycosylation occurs at Asn-403.

It belongs to the AB hydrolase superfamily. Lipase family.

It localises to the secreted. Its function is as follows. Acylhydrolase that catalyzes the hydrolysis of phospholipids at the sn-1 position. The chain is Phospholipase A1-II 3 from Oryza sativa subsp. japonica (Rice).